The primary structure comprises 428 residues: MFFTCGPNEAMVVSGFCRSPPVMVAGGRVFVLPCIQQIQRISLNTLTLNVKSEKVYTRHGVPISVTGIAQVKIQGQNKEMLAAACQMFLGKTEAEIAHIALETLEGHQRAIMAHMTVEEIYKDRQKFSEQVFKVASSDLVNMGISVVSYTLKDIHDDQDYLHSLGKARTAQVQKDARIGEAEAKRDAGIREAKAKQEKVSAQCLSEIEMAKAQRDYELKKATYDIEVNTRRAQADLAYQLQVAKTKQQIEEQRVQVQVVERAQQVAVQEQEIARREKELEARVRKPAEAERYRLERLAEAEKAQLIMQAEAEAESVRMRGEAEAFAIGARARAEAEQMAKKAEAFQMYQEAAQLDMLLEKLPQVAEEISGPLTSANKITLVSSGSGTMGAAKVTGEVLDILSRLPESVERLTGVSISQVNHNKPLRTA.

Phosphoserine is present on residues Ser19, Ser163, and Ser385. A Phosphothreonine modification is found at Thr387.

The protein belongs to the band 7/mec-2 family. Flotillin subfamily. In terms of assembly, heterooligomeric complex of flotillin-1 and flotillin-2 and caveolin-1 and caveolin-2. Interacts with ECPAS. As to expression, high expression in brain, white adipose tissue, heart muscle, skeletal muscle and lung. Low expression in spleen, liver and testis.

It localises to the cell membrane. It is found in the endosome. The protein localises to the membrane. The protein resides in the caveola. Its subcellular location is the melanosome. It localises to the membrane raft. Functionally, may act as a scaffolding protein within caveolar membranes, functionally participating in formation of caveolae or caveolae-like vesicles. In Mus musculus (Mouse), this protein is Flotillin-1 (Flot1).